Reading from the N-terminus, the 215-residue chain is Methylthioribulose-1-phosphate dehydratase (215 aa).

2 residues coordinate Zn(2+): His103 and His105.

Belongs to the aldolase class II family. MtnB subfamily. Requires Zn(2+) as cofactor.

The catalysed reaction is 5-(methylsulfanyl)-D-ribulose 1-phosphate = 5-methylsulfanyl-2,3-dioxopentyl phosphate + H2O. The protein operates within amino-acid biosynthesis; L-methionine biosynthesis via salvage pathway; L-methionine from S-methyl-5-thio-alpha-D-ribose 1-phosphate: step 2/6. Functionally, catalyzes the dehydration of methylthioribulose-1-phosphate (MTRu-1-P) into 2,3-diketo-5-methylthiopentyl-1-phosphate (DK-MTP-1-P). The polypeptide is Methylthioribulose-1-phosphate dehydratase (Sulfurihydrogenibium sp. (strain YO3AOP1)).